The chain runs to 540 residues: Testis-specific chromodomain protein Y 1 (540 aa).

The region spanning 6–66 is the Chromo domain; it reads FEVEAIVDKR…RQTEKQKKLT (61 aa). The interval 76–106 is disordered; that stretch reads NNARRRTSRSTKANYSKNSPKTPVTDKHHRS. Residues 87 to 97 show a composition bias toward polar residues; sequence KANYSKNSPKT.

Interacts (via chromo domain) with histone H3K9me3. As to expression, testis-specific. Detected in spermatids (at protein level).

It is found in the nucleus. The catalysed reaction is L-lysyl-[protein] + acetyl-CoA = N(6)-acetyl-L-lysyl-[protein] + CoA + H(+). Functionally, has histone acetyltransferase activity, with a preference for histone H4. This is Testis-specific chromodomain protein Y 1 (CDY1) from Homo sapiens (Human).